A 231-amino-acid chain; its full sequence is Putative cobalt transport protein CbiM 1 (231 aa).

Helical transmembrane passes span 8–28, 41–61, 74–94, 97–117, 138–158, and 175–195; these read LPLQWCLFWFAVSAPFIAYGI, TLPLLAVCGAFIFVLSSLKMP, GLGAIMFGPFITSVLSIIVLV, ALFLAHGGLTTLGANVFSMGI, IVNVFLASALADIFTYVITSI, and FITFAGIFAVTQVPLAIIEGI.

The protein belongs to the CbiM family. As to quaternary structure, forms an energy-coupling factor (ECF) transporter complex composed of an ATP-binding protein (A component, CbiO), a transmembrane protein (T component, CbiQ) and 2 possible substrate-capture proteins (S components, CbiM and CbiN) of unknown stoichimetry.

The protein resides in the cell membrane. It functions in the pathway cofactor biosynthesis; adenosylcobalamin biosynthesis. Its function is as follows. Part of the energy-coupling factor (ECF) transporter complex CbiMNOQ involved in cobalt import. The chain is Putative cobalt transport protein CbiM 1 from Methanosphaerula palustris (strain ATCC BAA-1556 / DSM 19958 / E1-9c).